The chain runs to 294 residues: Indole-3-glycerol phosphate synthase (294 aa).

This sequence belongs to the TrpC family.

It catalyses the reaction 1-(2-carboxyphenylamino)-1-deoxy-D-ribulose 5-phosphate + H(+) = (1S,2R)-1-C-(indol-3-yl)glycerol 3-phosphate + CO2 + H2O. The protein operates within amino-acid biosynthesis; L-tryptophan biosynthesis; L-tryptophan from chorismate: step 4/5. This Parasynechococcus marenigrum (strain WH8102) protein is Indole-3-glycerol phosphate synthase.